We begin with the raw amino-acid sequence, 124 residues long: Small ribosomal subunit protein uS13 (124 aa).

A disordered region spans residues 96–124 (LPVRGQRTKTNARTRKGPRRTVAGKKKAK).

The protein belongs to the universal ribosomal protein uS13 family. Part of the 30S ribosomal subunit. Forms a loose heterodimer with protein S19. Forms two bridges to the 50S subunit in the 70S ribosome.

Its function is as follows. Located at the top of the head of the 30S subunit, it contacts several helices of the 16S rRNA. In the 70S ribosome it contacts the 23S rRNA (bridge B1a) and protein L5 of the 50S subunit (bridge B1b), connecting the 2 subunits; these bridges are implicated in subunit movement. Contacts the tRNAs in the A and P-sites. The chain is Small ribosomal subunit protein uS13 from Symbiobacterium thermophilum (strain DSM 24528 / JCM 14929 / IAM 14863 / T).